The chain runs to 304 residues: Aquaglyceroporin-3 (304 aa).

Over 1-68 (MQSQPDNVAY…LRLNYRDYMG (68 aa)) the chain is Cytoplasmic. A helical transmembrane segment spans residues 69–89 (ELLGTFVLLFMGNGVVATVII). Residues 90-95 (DGKLGF) lie on the Extracellular side of the membrane. The chain crosses the membrane as a helical span at residues 96 to 116 (LSITLGWGIAVTMALYVSLGI). The Cytoplasmic portion of the chain corresponds to 117–142 (SSGHLNPAVTVGNAVFGDFPWRKVPG). The helical transmembrane segment at 143 to 163 (YIAAQMLGAFLGAACAYGVFA) threads the bilayer. Over 164 to 196 (DLLKAHGGGELIAFGEKGTAGVFSTYPRDSNGL) the chain is Extracellular. The chain crosses the membrane as a helical span at residues 197 to 217 (FSCIFGEFICTAMLLFCVCGI). Residues 218–231 (FDPNNSPAKGHEPL) are Cytoplasmic-facing. The chain crosses the membrane as a helical span at residues 232-252 (AVGALVFAIGNNIGYSTGYAI). Over 253 to 277 (NPARDFGPRVFSSFLYGGEVFSHAN) the chain is Extracellular. A helical membrane pass occupies residues 278-298 (YYFWVPLVIPLFGGIFGLFLY). Residues 299–304 (KYFVPH) lie on the Cytoplasmic side of the membrane.

It belongs to the MIP/aquaporin (TC 1.A.8) family.

It is found in the cell membrane. The enzyme catalyses glycerol(in) = glycerol(out). It carries out the reaction H2O(in) = H2O(out). It catalyses the reaction urea(in) = urea(out). Functionally, mediates water and glycerol transport across the cell membrane. Permeable to urea. Permeable to methylamine/methylammonium. Permeable to dihydroxyacetone. Permeable to erythritol and ribitol. In Trypanosoma brucei brucei, this protein is Aquaglyceroporin-3.